Consider the following 156-residue polypeptide: Phosphopantetheine adenylyltransferase (156 aa).

Position 9 (threonine 9) interacts with substrate. Residues 9–10 and histidine 17 each bind ATP; that span reads TF. Positions 41, 73, and 87 each coordinate substrate. ATP-binding positions include 88 to 90, glutamate 98, and 123 to 129; these read GVR and WAFVSST.

It belongs to the bacterial CoaD family. Homohexamer. It depends on Mg(2+) as a cofactor.

It localises to the cytoplasm. The catalysed reaction is (R)-4'-phosphopantetheine + ATP + H(+) = 3'-dephospho-CoA + diphosphate. The protein operates within cofactor biosynthesis; coenzyme A biosynthesis; CoA from (R)-pantothenate: step 4/5. Reversibly transfers an adenylyl group from ATP to 4'-phosphopantetheine, yielding dephospho-CoA (dPCoA) and pyrophosphate. The sequence is that of Phosphopantetheine adenylyltransferase from Haemophilus influenzae (strain 86-028NP).